The chain runs to 131 residues: Small ribosomal subunit protein uS11 (131 aa).

The protein belongs to the universal ribosomal protein uS11 family. Part of the 30S ribosomal subunit.

Its function is as follows. Located on the platform of the 30S subunit. This chain is Small ribosomal subunit protein uS11, found in Methanospirillum hungatei JF-1 (strain ATCC 27890 / DSM 864 / NBRC 100397 / JF-1).